Consider the following 42-residue polypeptide: Large ribosomal subunit protein bL36 (42 aa).

It belongs to the bacterial ribosomal protein bL36 family.

The polypeptide is Large ribosomal subunit protein bL36 (Anaplasma marginale (strain St. Maries)).